A 98-amino-acid chain; its full sequence is uncharacterized protein (98 aa).

Belongs to the HesB/IscA family.

This is an uncharacterized protein from Staphylococcus aureus (strain MRSA252).